The following is a 621-amino-acid chain: UvrABC system protein C (621 aa).

One can recognise a GIY-YIG domain in the interval 20-98 (MAPGVYCMYA…IKSLAPRYNV (79 aa)). The UVR domain maps to 207–242 (DLLAEELIQAMQVASEHLEFEQAARLRDLLTSLRSM).

It belongs to the UvrC family. As to quaternary structure, interacts with UvrB in an incision complex.

The protein localises to the cytoplasm. The UvrABC repair system catalyzes the recognition and processing of DNA lesions. UvrC both incises the 5' and 3' sides of the lesion. The N-terminal half is responsible for the 3' incision and the C-terminal half is responsible for the 5' incision. This Xylella fastidiosa (strain 9a5c) protein is UvrABC system protein C.